A 657-amino-acid polypeptide reads, in one-letter code: ER degradation-enhancing alpha-mannosidase-like protein 1 (657 aa).

Residues 1–4 lie on the Cytoplasmic side of the membrane; it reads MQWR. The helical; Signal-anchor for type II membrane protein transmembrane segment at 5-25 threads the bilayer; the sequence is ALVLGLVLLRLGLHGVLWLVF. At 26–657 the chain is on the lumenal side; it reads GLGPSMGFYQ…RQIDQMVGLI (632 aa). Residues 48–94 are disordered; that stretch reads SPDGPASPTSGPVGRPGGVSGPSWLQPPGTGAAQSPRKAPRRPGPGM. Asn181, Asn198, Asn299, Asn342, and Asn624 each carry an N-linked (GlcNAc...) asparagine glycan.

The protein belongs to the glycosyl hydrolase 47 family. As to quaternary structure, interacts with DNAJC10. Interacts with DERL2 and DERL3. Binds to SEL1L.

It localises to the endoplasmic reticulum membrane. In terms of biological role, extracts misfolded glycoproteins, but not glycoproteins undergoing productive folding, from the calnexin cycle. It is directly involved in endoplasmic reticulum-associated degradation (ERAD) and targets misfolded glycoproteins for degradation in an N-glycan-independent manner, probably by forming a complex with SEL1L. It has low mannosidase activity, catalyzing mannose trimming from Man8GlcNAc2 to Man7GlcNAc2. This chain is ER degradation-enhancing alpha-mannosidase-like protein 1 (EDEM1), found in Homo sapiens (Human).